The primary structure comprises 512 residues: Histidine ammonia-lyase (512 aa).

A cross-link (5-imidazolinone (Ala-Gly)) is located at residues 144–146 (ASG). At Ser145 the chain carries 2,3-didehydroalanine (Ser).

This sequence belongs to the PAL/histidase family. Contains an active site 4-methylidene-imidazol-5-one (MIO), which is formed autocatalytically by cyclization and dehydration of residues Ala-Ser-Gly.

The protein localises to the cytoplasm. It carries out the reaction L-histidine = trans-urocanate + NH4(+). It participates in amino-acid degradation; L-histidine degradation into L-glutamate; N-formimidoyl-L-glutamate from L-histidine: step 1/3. In Desulfotalea psychrophila (strain LSv54 / DSM 12343), this protein is Histidine ammonia-lyase.